The sequence spans 71 residues: Large ribosomal subunit protein uL29 (71 aa).

This sequence belongs to the universal ribosomal protein uL29 family.

The protein is Large ribosomal subunit protein uL29 of Methanocella arvoryzae (strain DSM 22066 / NBRC 105507 / MRE50).